The sequence spans 341 residues: tRNA N6-adenosine threonylcarbamoyltransferase (341 aa).

Fe cation contacts are provided by His-111 and His-115. Substrate-binding positions include 134 to 138 (LVSGG), Asp-167, Gly-180, and Asn-270. Asp-298 lines the Fe cation pocket.

This sequence belongs to the KAE1 / TsaD family. The cofactor is Fe(2+).

It is found in the cytoplasm. The enzyme catalyses L-threonylcarbamoyladenylate + adenosine(37) in tRNA = N(6)-L-threonylcarbamoyladenosine(37) in tRNA + AMP + H(+). In terms of biological role, required for the formation of a threonylcarbamoyl group on adenosine at position 37 (t(6)A37) in tRNAs that read codons beginning with adenine. Is involved in the transfer of the threonylcarbamoyl moiety of threonylcarbamoyl-AMP (TC-AMP) to the N6 group of A37, together with TsaE and TsaB. TsaD likely plays a direct catalytic role in this reaction. This is tRNA N6-adenosine threonylcarbamoyltransferase from Thiobacillus denitrificans (strain ATCC 25259 / T1).